A 382-amino-acid polypeptide reads, in one-letter code: Secreted RxLR effector protein 118 (382 aa).

A signal peptide spans 1-21 (MRGAYYVTIALLVVASSQISA). The RxLR-dEER signature appears at 48–65 (RSLRGSRDVSNDVAIEER). The interval 308 to 382 (MNKASTSKGK…AVTSLSSISN (75 aa)) is disordered. The span at 310–323 (KASTSKGKSSVFTR) shows a compositional bias: polar residues.

The protein belongs to the RxLR effector family.

It localises to the secreted. The protein localises to the host nucleus. Its function is as follows. Secreted effector that completely suppresses the host cell death induced by cell death-inducing proteins. In Plasmopara viticola (Downy mildew of grapevine), this protein is Secreted RxLR effector protein 118.